Consider the following 463-residue polypeptide: Hydrolase pyiE (463 aa).

Residue Ser-252 is the Nucleophile of the active site. A disordered region spans residues 350–373; sequence KSDGSRANGKKSHSPTDGGGVESD.

It belongs to the AB hydrolase superfamily. FUS2 hydrolase family. Homodimer.

The protein operates within mycotoxin biosynthesis. Functionally, hydrolyase; part of the gene cluster that mediates the biosynthesis of the mycotoxin pyrichalasin H, a tyrosine-derived cytochalasan that inhibits the growth of rice seedlings, but also inhibits lymphocyte capping and actin polymerization and alters cell morphology. Pyrichalasin H is indicated as the responsible agent for the genus-specific pathogenicity of M.grisea toward crabgrass. The first step in the pathway is catalyzed by the O-methyltransferase pyiA which methylates free tyrosine to generate the precursor O-methyltyrosine. The hybrid PKS-NRPS pyiS, assisted by the enoyl reductase pyiC, are responsible for fusion of the O-methyltyrosine precursor and the polyketide backbone. The polyketide synthase module (PKS) of pyiS is responsible for the synthesis of the polyketide backbone and the downstream nonribosomal peptide synthetase (NRPS) amidates the carboxyl end of the polyketide with the O-methyltyrosine precursor. As the NRPS A-domain demonstrates substrate tolerance, pyiS can also use phenylalanine, tyrosine and even para-chlorophenylalanine as amino acid precursor, which leads to the production of novel cytochalasans, including halogenated cytochalasans. Because pyiS lacks a designated enoylreductase (ER) domain, the required activity is provided the enoyl reductase pyiC. Reduction by the hydrolyase pyiE leads to 1,5-dihydropyrrolone, which is substrate for dehydration and intra-molecular Diels-Alder cyclization by the Diels-Alderase pyiF to yield the required isoindolone-fused macrocycle. The tailoring cytochrome P450 monooxygenases piyD and piyG catalyze the hydroxylation at C-18 and C-7, respectivily, whereas the short-chain dehydrogenase/reductase pyiH reduces the carbonyl at C-21 in preparation for the transfer of an acetyl group by the acetyltransferase pyiB. These 3 reactions whose order is not clear yet, lead to the production of O-methylpyrichalasin J, a deacetylated pyrichalasin H. Finally, pyiB to converts O-methylpyrichalasin J into the final product pyrichalasin H via acetylation of C-21. The chain is Hydrolase pyiE from Pyricularia grisea (Crabgrass-specific blast fungus).